Consider the following 249-residue polypeptide: Type III pantothenate kinase (249 aa).

6-13 (DCGNSFIK) is a binding site for ATP. Substrate-binding positions include tyrosine 93 and 100 to 103 (GLDR). Aspartate 102 acts as the Proton acceptor in catalysis. Aspartate 122 provides a ligand contact to K(+). Position 125 (threonine 125) interacts with ATP. Threonine 181 is a substrate binding site.

It belongs to the type III pantothenate kinase family. Homodimer. Requires NH4(+) as cofactor. The cofactor is K(+).

It is found in the cytoplasm. The catalysed reaction is (R)-pantothenate + ATP = (R)-4'-phosphopantothenate + ADP + H(+). It functions in the pathway cofactor biosynthesis; coenzyme A biosynthesis; CoA from (R)-pantothenate: step 1/5. Catalyzes the phosphorylation of pantothenate (Pan), the first step in CoA biosynthesis. The polypeptide is Type III pantothenate kinase (Pseudomonas syringae pv. syringae (strain B728a)).